The sequence spans 151 residues: UPF0178 protein YaiI (151 aa).

Belongs to the UPF0178 family.

This chain is UPF0178 protein YaiI, found in Salmonella choleraesuis (strain SC-B67).